Here is a 115-residue protein sequence, read N- to C-terminus: Large ribosomal subunit protein bL21 (115 aa).

It belongs to the bacterial ribosomal protein bL21 family. In terms of assembly, part of the 50S ribosomal subunit. Contacts protein L20.

This protein binds to 23S rRNA in the presence of protein L20. The sequence is that of Large ribosomal subunit protein bL21 from Coxiella burnetii (strain Dugway 5J108-111).